Consider the following 189-residue polypeptide: Peptidyl-tRNA hydrolase (189 aa).

Y15 is a binding site for tRNA. H20 functions as the Proton acceptor in the catalytic mechanism. TRNA-binding residues include Y67, N69, and N115.

It belongs to the PTH family. As to quaternary structure, monomer.

The protein localises to the cytoplasm. It carries out the reaction an N-acyl-L-alpha-aminoacyl-tRNA + H2O = an N-acyl-L-amino acid + a tRNA + H(+). Hydrolyzes ribosome-free peptidyl-tRNAs (with 1 or more amino acids incorporated), which drop off the ribosome during protein synthesis, or as a result of ribosome stalling. Its function is as follows. Catalyzes the release of premature peptidyl moieties from peptidyl-tRNA molecules trapped in stalled 50S ribosomal subunits, and thus maintains levels of free tRNAs and 50S ribosomes. The sequence is that of Peptidyl-tRNA hydrolase from Symbiobacterium thermophilum (strain DSM 24528 / JCM 14929 / IAM 14863 / T).